The primary structure comprises 269 residues: UPF0739 protein C1orf74 (269 aa).

Belongs to the UPF0739 family.

In Homo sapiens (Human), this protein is UPF0739 protein C1orf74 (C1orf74).